Reading from the N-terminus, the 296-residue chain is NAD kinase (296 aa).

The active-site Proton acceptor is the D72. NAD(+) contacts are provided by residues 72–73 (DG), 146–147 (ND), R157, K174, D176, 187–192 (TAYALS), and Q247.

Belongs to the NAD kinase family. Requires a divalent metal cation as cofactor.

The protein resides in the cytoplasm. The enzyme catalyses NAD(+) + ATP = ADP + NADP(+) + H(+). In terms of biological role, involved in the regulation of the intracellular balance of NAD and NADP, and is a key enzyme in the biosynthesis of NADP. Catalyzes specifically the phosphorylation on 2'-hydroxyl of the adenosine moiety of NAD to yield NADP. In Pseudomonas putida (strain ATCC 700007 / DSM 6899 / JCM 31910 / BCRC 17059 / LMG 24140 / F1), this protein is NAD kinase.